Reading from the N-terminus, the 117-residue chain is Large ribosomal subunit protein bL20 (117 aa).

The protein belongs to the bacterial ribosomal protein bL20 family.

Functionally, binds directly to 23S ribosomal RNA and is necessary for the in vitro assembly process of the 50S ribosomal subunit. It is not involved in the protein synthesizing functions of that subunit. The protein is Large ribosomal subunit protein bL20 of Vibrio metschnikovii.